Here is a 693-residue protein sequence, read N- to C-terminus: Kinesin-like protein KIFC1 (693 aa).

Disordered stretches follow at residues 1–24 (MRGR…VRTT) and 48–156 (VKSS…KRPA). 2 stretches are compositionally biased toward low complexity: residues 49–59 (KSSSRLPLPGS) and 127–138 (QKPAPAAPAQKP). Phosphoserine is present on residues serine 52 and serine 59. Residues 165–334 (DLHEELKQYR…QELKGNIRVF (170 aa)) are a coiled coil. The Kinesin motor domain occupies 330-683 (NIRVFCRVRP…LRFASKVNQC (354 aa)). Residue threonine 379 is modified to Phosphothreonine. 430–437 (GQTGSGKT) serves as a coordination point for ATP.

Belongs to the TRAFAC class myosin-kinesin ATPase superfamily. Kinesin family. NCD subfamily. Binds NUBP1 and NUBP2. Interacts with PPP1R42.

It localises to the nucleus. Its subcellular location is the cytoplasm. The protein localises to the cytoskeleton. It is found in the microtubule organizing center. The protein resides in the centrosome. It localises to the spindle. Its subcellular location is the early endosome. Minus end-directed microtubule-dependent motor required for bipolar spindle formation. May contribute to movement of early endocytic vesicles. Regulates cilium formation and structure. In Rattus norvegicus (Rat), this protein is Kinesin-like protein KIFC1.